Consider the following 37-residue polypeptide: Cytochrome b6-f complex subunit 5 (37 aa).

The helical transmembrane segment at 5 to 25 threads the bilayer; that stretch reads LLFGIVLGLIPVTLTGLFVAA.

Belongs to the PetG family. The 4 large subunits of the cytochrome b6-f complex are cytochrome b6, subunit IV (17 kDa polypeptide, PetD), cytochrome f and the Rieske protein, while the 4 small subunits are PetG, PetL, PetM and PetN. The complex functions as a dimer.

Its subcellular location is the plastid. The protein localises to the chloroplast thylakoid membrane. Functionally, component of the cytochrome b6-f complex, which mediates electron transfer between photosystem II (PSII) and photosystem I (PSI), cyclic electron flow around PSI, and state transitions. PetG is required for either the stability or assembly of the cytochrome b6-f complex. The sequence is that of Cytochrome b6-f complex subunit 5 from Guillardia theta (Cryptophyte).